A 204-amino-acid chain; its full sequence is Ribonuclease HII (204 aa).

Residues 14-204 enclose the RNase H type-2 domain; it reads QYICGVDEVG…SFKLSCLGEK (191 aa). Aspartate 20, glutamate 21, and aspartate 116 together coordinate a divalent metal cation.

Belongs to the RNase HII family. It depends on Mn(2+) as a cofactor. The cofactor is Mg(2+).

Its subcellular location is the cytoplasm. The enzyme catalyses Endonucleolytic cleavage to 5'-phosphomonoester.. Endonuclease that specifically degrades the RNA of RNA-DNA hybrids. This is Ribonuclease HII from Chloroherpeton thalassium (strain ATCC 35110 / GB-78).